Here is a 221-residue protein sequence, read N- to C-terminus: Ras-related protein Rab-28 (221 aa).

Residue serine 2 is modified to N-acetylserine. Position 8 is a phosphoserine (serine 8). GTP is bound by residues glycine 21, glycine 24, lysine 25, threonine 26, serine 27, glycine 38, lysine 39, tyrosine 41, and threonine 44. Threonine 26 lines the Mg(2+) pocket. The interval 35 to 49 (ETFGKRYKQTIGLDF) is switch I. Positions 44 and 68 each coordinate Mg(2+). The tract at residues 68-85 (DIGGQTIGGKMLDKYIYG) is switch II. Glycine 71, asparagine 129, lysine 130, aspartate 132, alanine 160, and lysine 161 together coordinate GTP. At cysteine 218 the chain carries Cysteine methyl ester. Cysteine 218 carries the S-farnesyl cysteine lipid modification. Residues 219–221 (AVQ) constitute a propeptide, removed in mature form.

Belongs to the small GTPase superfamily. Rab family. Interacts (prenylated form) with PDE6D; the interaction promotes RAB28 delivery to the photoreceptor outer segments. Interacts with KCNJ13; the interaction may facilitate cone outer segments phagocytosis. Also participates in nuclear factor kappa-B p65/RELA nuclear transport in endothelial cells. Mg(2+) is required as a cofactor. In terms of processing, isoprenylated.

It is found in the cell membrane. The protein resides in the cytoplasm. The protein localises to the cytoskeleton. Its subcellular location is the cilium basal body. It localises to the nucleus. The catalysed reaction is GTP + H2O = GDP + phosphate + H(+). Regulated by guanine nucleotide exchange factors (GEFs) which promote the exchange of bound GDP for free GTP. Regulated by GTPase activating proteins (GAPs) which increase the GTP hydrolysis activity. Inhibited by GDP dissociation inhibitors (GDIs). The small GTPases Rab are key regulators of intracellular membrane trafficking, from the formation of transport vesicles to their fusion with membranes. Rabs cycle between an inactive GDP-bound form and an active GTP-bound form that is able to recruit to membranes different sets of downstream effectors directly responsible for vesicle formation, movement, tethering and fusion. RAB28 is required for shedding and phagocytosis of cone cell outer segments (OS) discs in the retina. Also participates in nuclear factor kappa-B p65/RELA nuclear transport in endothelial cells. This is Ras-related protein Rab-28 (RAB28) from Pongo abelii (Sumatran orangutan).